Consider the following 233-residue polypeptide: Small ribosomal subunit protein uS3 (233 aa).

The KH type-2 domain occupies 39 to 107 (VRQYLKKELA…PAQINISEVR (69 aa)).

The protein belongs to the universal ribosomal protein uS3 family. Part of the 30S ribosomal subunit. Forms a tight complex with proteins S10 and S14.

Binds the lower part of the 30S subunit head. Binds mRNA in the 70S ribosome, positioning it for translation. The chain is Small ribosomal subunit protein uS3 from Photorhabdus laumondii subsp. laumondii (strain DSM 15139 / CIP 105565 / TT01) (Photorhabdus luminescens subsp. laumondii).